The primary structure comprises 248 residues: Deoxyribose-phosphate aldolase (248 aa).

Catalysis depends on Asp-117, which acts as the Proton donor/acceptor. Lys-179 (schiff-base intermediate with acetaldehyde) is an active-site residue. Residue Lys-208 is the Proton donor/acceptor of the active site.

The protein belongs to the DeoC/FbaB aldolase family. DeoC type 1 subfamily.

It is found in the cytoplasm. It carries out the reaction 2-deoxy-D-ribose 5-phosphate = D-glyceraldehyde 3-phosphate + acetaldehyde. Its pathway is carbohydrate degradation; 2-deoxy-D-ribose 1-phosphate degradation; D-glyceraldehyde 3-phosphate and acetaldehyde from 2-deoxy-alpha-D-ribose 1-phosphate: step 2/2. Functionally, catalyzes a reversible aldol reaction between acetaldehyde and D-glyceraldehyde 3-phosphate to generate 2-deoxy-D-ribose 5-phosphate. This is Deoxyribose-phosphate aldolase from Thermotoga maritima (strain ATCC 43589 / DSM 3109 / JCM 10099 / NBRC 100826 / MSB8).